Consider the following 63-residue polypeptide: Small ribosomal subunit protein bS21 (63 aa).

Basic and acidic residues predominate over residues 40–52; sequence KPSVKRKLKSEAA. The segment at 40-63 is disordered; sequence KPSVKRKLKSEAARKRKNKRGRRY. The segment covering 53-63 has biased composition (basic residues); it reads RKRKNKRGRRY.

This sequence belongs to the bacterial ribosomal protein bS21 family.

This Limosilactobacillus reuteri (strain DSM 20016) (Lactobacillus reuteri) protein is Small ribosomal subunit protein bS21.